The sequence spans 786 residues: Keratin, type I cytoskeletal 9 (786 aa).

Residues 1 to 21 (MNCRQFLSSHCSRDSSGGGGG) are disordered. The head stretch occupies residues 1–136 (MNCRQFLSSH…SGAGGILGAD (136 aa)). Serine 52 bears the Phosphoserine mark. A coil 1A region spans residues 137-172 (EKTTMQDLNSRLASYLDKVQALEDANKELESKIREW). The region spanning 137–449 (EKTTMQDLNS…SLLEGGQEDF (313 aa)) is the IF rod domain. The tract at residues 173 to 191 (YDKQGSRTFHRDYSPYYDT) is linker 1. The coil 1B stretch occupies residues 192–283 (IEDLKNQIVN…KNHEDEMSQL (92 aa)). Residues 284 to 306 (TGQNSGDVNVEMNAAPGRDLTKI) are linker 12. Residues 307 to 445 (LNDMREEYER…KTYRSLLEGG (139 aa)) are coil 2. Residues 446–760 (QEDFESHESG…GGGSGSKGGS (315 aa)) are tail. Positions 447–786 (EDFESHESGQ…DDTQGYHIQY (340 aa)) are disordered. Composition is skewed to gly residues over residues 460–657 (GSGG…GGSG) and 664–761 (SSSG…GGSG). A compositionally biased stretch (low complexity) spans 762–773 (RSSQVQSSSSKS).

The protein belongs to the intermediate filament family. In terms of assembly, heterotetramer of two type I and two type II keratins.

May serve an important special function either in the mature palmar and plantar skin tissue or in the morphogenetic program of the formation of these tissues. Plays a role in keratin filament assembly. This Canis lupus familiaris (Dog) protein is Keratin, type I cytoskeletal 9.